We begin with the raw amino-acid sequence, 500 residues long: Gamma-glutamylanilide synthase (500 aa).

Residues 32–136 form the GS beta-grasp domain; it reads LGLEMIRLSW…MLADLHWKSG (105 aa). The 358-residue stretch at 143 to 500 folds into the GS catalytic domain; the sequence is PRGIMKKAVK…WEQKEYFNLL (358 aa).

It belongs to the glutamine synthetase family. Homohexamer.

The enzyme catalyses aniline + L-glutamate + ATP = N(5)-phenyl-L-glutamine + ADP + phosphate. Its function is as follows. Involved in the initial oxidation of aniline to catechol by the release of its amino group. Catalyzes the ATP-dependent ligation of L-glutamate to aniline to yield gamma-glutamylanilide (gamma-GA). AtdA1 has a broad substrate range and is able to convert the following anilines, including chlorinated and methylated forms of aniline: aniline (100%), o-chloroaniline (92%), m-chloroaniline (69%), p-chloroaniline (92%), o-methylaniline (40%), m-methylaniline (27%) and p-methylaniline (45%). This chain is Gamma-glutamylanilide synthase, found in Acinetobacter sp.